The sequence spans 69 residues: Conotoxin Lp3.1 (69 aa).

The N-terminal stretch at 1 to 20 is a signal peptide; it reads MLKMGVLLFIFLVLFPLTTL. Positions 21 to 54 are excised as a propeptide; the sequence is ELDTDRPVERHAAIKQDLKPQERRGIRLHAPRDE. 3 disulfide bridges follow: Cys-55/Cys-67, Cys-56/Cys-65, and Cys-61/Cys-68.

The protein belongs to the conotoxin M superfamily. Expressed by the venom duct.

The protein localises to the secreted. The chain is Conotoxin Lp3.1 from Conus leopardus (Leopard cone).